The chain runs to 647 residues: UvrABC system protein C (647 aa).

Residues 16-95 (VEPGVYRFRD…IKEFDPRFNI (80 aa)) enclose the GIY-YIG domain. A UVR domain is found at 208 to 243 (DRYARDLERKMSAAAEQLDFERAARLRDDLFALKRA).

It belongs to the UvrC family. As to quaternary structure, interacts with UvrB in an incision complex.

It is found in the cytoplasm. Functionally, the UvrABC repair system catalyzes the recognition and processing of DNA lesions. UvrC both incises the 5' and 3' sides of the lesion. The N-terminal half is responsible for the 3' incision and the C-terminal half is responsible for the 5' incision. This chain is UvrABC system protein C, found in Mycobacterium leprae (strain Br4923).